We begin with the raw amino-acid sequence, 156 residues long: MPRKGPVPRREILPDPVYNSRLAARFINRLMYDGKKGVAEKLFYKSLETLGEKTGEEPLKAFERAVESVKPHLEVKARRVGGATYQVPMDVRPDRQVSLAIRWLINYARSRGEKGMSAKLSAELIDAFNSRGGAVKKKEDTHRMAEANKAFAHYRW.

Belongs to the universal ribosomal protein uS7 family. As to quaternary structure, part of the 30S ribosomal subunit. Contacts proteins S9 and S11.

One of the primary rRNA binding proteins, it binds directly to 16S rRNA where it nucleates assembly of the head domain of the 30S subunit. Is located at the subunit interface close to the decoding center, probably blocks exit of the E-site tRNA. The protein is Small ribosomal subunit protein uS7 of Nitratidesulfovibrio vulgaris (strain DSM 19637 / Miyazaki F) (Desulfovibrio vulgaris).